The primary structure comprises 395 residues: Aspergillopepsin-1 (395 aa).

An N-terminal signal peptide occupies residues 1–20; that stretch reads MVVFSKVTAVVVGLSTIVSA. Residues 21-70 constitute a propeptide, activation peptide; the sequence is VPVVQPRKGFTINQVARPVTNKKTVNLPAVYANALTKYGGTVPDSVKAAA. The 307-residue stretch at 86–392 folds into the Peptidase A1 domain; the sequence is YLTPVKVGGT…DSQGPRLGFA (307 aa). Active-site residues include aspartate 102 and aspartate 284. Cysteine 320 and cysteine 355 are oxidised to a cystine.

Belongs to the peptidase A1 family. As to quaternary structure, monomer.

It localises to the secreted. It carries out the reaction Hydrolysis of proteins with broad specificity. Generally favors hydrophobic residues in P1 and P1', but also accepts Lys in P1, which leads to activation of trypsinogen. Does not clot milk.. Functionally, secreted aspartic endopeptidase that allows assimilation of proteinaceous substrates. The scissile peptide bond is attacked by a nucleophilic water molecule activated by two aspartic residues in the active site. Shows a broad primary substrate specificity. Favors hydrophobic residues at the P1 and P1' positions, but also accepts a lysine residue in the P1 position, leading to the activation of trypsinogen and chymotrypsinogen A. The chain is Aspergillopepsin-1 (pepA) from Aspergillus fumigatus (strain CBS 144.89 / FGSC A1163 / CEA10) (Neosartorya fumigata).